Reading from the N-terminus, the 459-residue chain is Putrescine aminotransferase (459 aa).

Pyridoxal 5'-phosphate-binding positions include 150-151 (GT) and Gln-274. Lys-300 carries the N6-(pyridoxal phosphate)lysine modification. Thr-332 contacts pyridoxal 5'-phosphate.

Belongs to the class-III pyridoxal-phosphate-dependent aminotransferase family. Putrescine aminotransferase subfamily. Pyridoxal 5'-phosphate is required as a cofactor.

It carries out the reaction an alkane-alpha,omega-diamine + 2-oxoglutarate = an omega-aminoaldehyde + L-glutamate. The enzyme catalyses putrescine + 2-oxoglutarate = 1-pyrroline + L-glutamate + H2O. The catalysed reaction is cadaverine + 2-oxoglutarate = 5-aminopentanal + L-glutamate. It functions in the pathway amine and polyamine degradation; putrescine degradation; 4-aminobutanal from putrescine (transaminase route): step 1/1. Catalyzes the aminotransferase reaction from putrescine to 2-oxoglutarate, leading to glutamate and 4-aminobutanal, which spontaneously cyclizes to form 1-pyrroline. This is the first step in one of two pathways for putrescine degradation, where putrescine is converted into 4-aminobutanoate (gamma-aminobutyrate or GABA) via 4-aminobutanal. Also functions as a cadaverine transaminase in a a L-lysine degradation pathway to succinate that proceeds via cadaverine, glutarate and L-2-hydroxyglutarate. In Enterobacter sp. (strain 638), this protein is Putrescine aminotransferase.